The sequence spans 377 residues: MSRGIIIIGSGFAARQLVKNIRKQDAHVPLTLIAADSMDEYNKPDLSHVISQSQRADDLTRQLAGEFAEQFNLRLFPHTWVADIDADAHVVKSQDKQWQYDKLVLATGAAAFVPPVAGRELMLTLNSQQEYRACETQLRAAQRVLIVGGGLIGSELAMDFCRAGKTVTLMDNAASLLASLMPPEVSSRLQHRLTDMGVHLQLKSQLQELEKSEAGIRATLASQRRIEVDAAIAATGLRPETALARRAGLVINHGVCVDSYLQTSHPDIYAIGDCAEINGQVLPFLQPIQLSAMYLAKNLLGGKAPLKLPAMLVKVKTPELPLYLAGETQRRDLSWHITAESDGMIAKGMSGEGQLRAFVASEDRMKEAFALLKMLPV.

This sequence belongs to the FAD-dependent oxidoreductase family. FAD serves as cofactor.

The protein localises to the cytoplasm. It carries out the reaction 2 reduced [nitric oxide reductase rubredoxin domain] + NAD(+) + H(+) = 2 oxidized [nitric oxide reductase rubredoxin domain] + NADH. The protein operates within nitrogen metabolism; nitric oxide reduction. One of at least two accessory proteins for anaerobic nitric oxide (NO) reductase. Reduces the rubredoxin moiety of NO reductase. The chain is Nitric oxide reductase FlRd-NAD(+) reductase from Salmonella arizonae (strain ATCC BAA-731 / CDC346-86 / RSK2980).